The sequence spans 249 residues: Transmembrane protein 150C (249 aa).

Residues 1-9 (MDGKKCSVW) lie on the Cytoplasmic side of the membrane. A helical membrane pass occupies residues 10-30 (MFLPLVFTVFTSAGLWIVYFI). At 31–64 (AVEDDKIFPLNSAERKPGVKHAPYISIAGDEPPA) the chain is on the extracellular side. Residues 65–85 (SCVFSQVMNMAAFLALVVAVL) form a helical membrane-spanning segment. The Cytoplasmic segment spans residues 86–97 (RFIQLKPKVLNP). Residues 98 to 118 (WLNISGLVALCLASFGMTLLG) traverse the membrane as a helical segment. At 119–130 (NFQLTNDEEIHN) the chain is on the extracellular side. The chain crosses the membrane as a helical span at residues 131–151 (VGTSLTFGFGTLTCWIQAALT). Topologically, residues 152–168 (LKVNIKNEGRKVGIPRV) are cytoplasmic. The helical transmembrane segment at 169–189 (ILSASITLCVVLYFILMAQGI) threads the bilayer. Topologically, residues 190–192 (HMY) are extracellular. A helical transmembrane segment spans residues 193–213 (AARVQWGLVMCFLSYFGTFAV). The Cytoplasmic segment spans residues 214 to 249 (EFRHYRYEIVCSEYQENFLSFSESLSEASEYQTDQV).

Belongs to the DRAM/TMEM150 family.

It localises to the cell membrane. The protein resides in the lysosome membrane. It catalyses the reaction Ca(2+)(in) = Ca(2+)(out). It carries out the reaction Na(+)(in) = Na(+)(out). The enzyme catalyses K(+)(in) = K(+)(out). The catalysed reaction is Mg(2+)(in) = Mg(2+)(out). Its function is as follows. Nonselective cationic channel with high permeability to Ca(2+). Component of a mechanosensitive cation channel. Confers mechanically activated (MA) currents with slow inactivation kinetics. May contribute to proprioception. This Bos taurus (Bovine) protein is Transmembrane protein 150C (TMEM150C).